A 361-amino-acid polypeptide reads, in one-letter code: tRNA/tmRNA (uracil-C(5))-methyltransferase (361 aa).

Residues Gln185, Tyr213, Asn218, Glu234, and Asp294 each contribute to the S-adenosyl-L-methionine site. Cys319 (nucleophile) is an active-site residue. Glu353 functions as the Proton acceptor in the catalytic mechanism.

Belongs to the class I-like SAM-binding methyltransferase superfamily. RNA M5U methyltransferase family. TrmA subfamily.

It catalyses the reaction uridine(54) in tRNA + S-adenosyl-L-methionine = 5-methyluridine(54) in tRNA + S-adenosyl-L-homocysteine + H(+). The enzyme catalyses uridine(341) in tmRNA + S-adenosyl-L-methionine = 5-methyluridine(341) in tmRNA + S-adenosyl-L-homocysteine + H(+). Functionally, dual-specificity methyltransferase that catalyzes the formation of 5-methyluridine at position 54 (m5U54) in all tRNAs, and that of position 341 (m5U341) in tmRNA (transfer-mRNA). This is tRNA/tmRNA (uracil-C(5))-methyltransferase from Pseudomonas putida (strain GB-1).